A 250-amino-acid chain; its full sequence is 2,3-bisphosphoglycerate-dependent phosphoglycerate mutase (250 aa).

Residues 10 to 17 (RHGESQWN), 23 to 24 (TG), Arg-62, 89 to 92 (ERHY), Lys-100, 116 to 117 (RR), and 185 to 186 (GN) each bind substrate. The active-site Tele-phosphohistidine intermediate is the His-11. The active-site Proton donor/acceptor is Glu-89.

It belongs to the phosphoglycerate mutase family. BPG-dependent PGAM subfamily. As to quaternary structure, homodimer.

The catalysed reaction is (2R)-2-phosphoglycerate = (2R)-3-phosphoglycerate. It functions in the pathway carbohydrate degradation; glycolysis; pyruvate from D-glyceraldehyde 3-phosphate: step 3/5. Its function is as follows. Catalyzes the interconversion of 2-phosphoglycerate and 3-phosphoglycerate. The sequence is that of 2,3-bisphosphoglycerate-dependent phosphoglycerate mutase from Klebsiella pneumoniae (strain 342).